The following is a 182-amino-acid chain: Large ribosomal subunit protein bL25 (182 aa).

Belongs to the bacterial ribosomal protein bL25 family. CTC subfamily. Part of the 50S ribosomal subunit; part of the 5S rRNA/L5/L18/L25 subcomplex. Contacts the 5S rRNA. Binds to the 5S rRNA independently of L5 and L18.

Its function is as follows. This is one of the proteins that binds to the 5S RNA in the ribosome where it forms part of the central protuberance. In Borreliella burgdorferi (strain ATCC 35210 / DSM 4680 / CIP 102532 / B31) (Borrelia burgdorferi), this protein is Large ribosomal subunit protein bL25.